Consider the following 428-residue polypeptide: Dihydroorotase (428 aa).

2 residues coordinate Zn(2+): histidine 59 and histidine 61. Residues 61–63 (HFR) and asparagine 93 each bind substrate. 3 residues coordinate Zn(2+): aspartate 151, histidine 178, and histidine 231. Asparagine 277 provides a ligand contact to substrate. Aspartate 304 is a Zn(2+) binding site. Residue aspartate 304 is part of the active site. Substrate is bound by residues histidine 308 and 322-323 (FG).

The protein belongs to the metallo-dependent hydrolases superfamily. DHOase family. Class I DHOase subfamily. As to quaternary structure, homodimer. It depends on Zn(2+) as a cofactor.

It catalyses the reaction (S)-dihydroorotate + H2O = N-carbamoyl-L-aspartate + H(+). It functions in the pathway pyrimidine metabolism; UMP biosynthesis via de novo pathway; (S)-dihydroorotate from bicarbonate: step 3/3. Its function is as follows. Catalyzes the reversible cyclization of carbamoyl aspartate to dihydroorotate. The chain is Dihydroorotase from Bacillus subtilis (strain 168).